A 578-amino-acid chain; its full sequence is Proline--tRNA ligase (578 aa).

It belongs to the class-II aminoacyl-tRNA synthetase family. ProS type 1 subfamily. Homodimer.

Its subcellular location is the cytoplasm. The enzyme catalyses tRNA(Pro) + L-proline + ATP = L-prolyl-tRNA(Pro) + AMP + diphosphate. Functionally, catalyzes the attachment of proline to tRNA(Pro) in a two-step reaction: proline is first activated by ATP to form Pro-AMP and then transferred to the acceptor end of tRNA(Pro). As ProRS can inadvertently accommodate and process non-cognate amino acids such as alanine and cysteine, to avoid such errors it has two additional distinct editing activities against alanine. One activity is designated as 'pretransfer' editing and involves the tRNA(Pro)-independent hydrolysis of activated Ala-AMP. The other activity is designated 'posttransfer' editing and involves deacylation of mischarged Ala-tRNA(Pro). The misacylated Cys-tRNA(Pro) is not edited by ProRS. The protein is Proline--tRNA ligase of Burkholderia ambifaria (strain MC40-6).